The sequence spans 419 residues: Akuammiline synthase 1 (419 aa).

The Proton acceptor role is filled by H151. Residues 206–213 carry the Nuclear localization signal motif; sequence TRRFVFPA. Residue D359 is the Proton acceptor of the active site.

The protein belongs to the plant acyltransferase family. Monomer.

It localises to the cytoplasm. The protein localises to the nucleus. It catalyses the reaction rhazimol + acetyl-CoA = akuammiline + CoA + H(+). The protein operates within alkaloid biosynthesis. In terms of biological role, acyltransferase involved in the biosynthesis of akuammilan monoterpene indole alkaloids (MIAs) natural products, components with various biological properties such as antidiabetic, antibacterial, anti-inflammatory, anticancer, and antimalarial activities. Catalyzes the conversion of rhazimol to akuammiline. In Alstonia scholaris (Dogbane), this protein is Akuammiline synthase 1.